The primary structure comprises 519 residues: Sorting nexin-2 (519 aa).

Disordered stretches follow at residues 1–20 (MAAE…DFEE) and 30–103 (STVS…VTPV). 2 stretches are compositionally biased toward low complexity: residues 30–44 (STVS…SPDP) and 93–103 (SSETSPAVTPV). S97 bears the Phosphoserine mark. A phosphothreonine mark is found at T101 and T104. Residues S117 and S119 each carry the phosphoserine modification. One can recognise a PX domain in the interval 140–269 (FDIEIGVSDP…QFLESSELPR (130 aa)). Residues R183, S185, K211, and R235 each coordinate a 1,2-diacyl-sn-glycero-3-phospho-(1D-myo-inositol-3-phosphate). Phosphoserine is present on S185. An interaction with RhoG region spans residues 260–519 (QFLESSELPR…AFLPEAKAIA (260 aa)). S277 carries the phosphoserine modification. The tract at residues 278–295 (GAGILRMVNKAADAVNKM) is membrane-binding amphipathic helix. Residues 299–519 (MNESDAWFEE…AFLPEAKAIA (221 aa)) form the BAR domain. K469 carries the N6-acetyllysine modification.

This sequence belongs to the sorting nexin family. As to quaternary structure, predominantly forms heterodimers with BAR domain-containing sorting nexins SNX5, SNX6 and SNX32; can self-associate to form homodimers. The heterodimers are proposed to self-assemble into helical arrays on the membrane to stabilize and expand local membrane curvature underlying endosomal tubule formation. Thought to be a component of the originally described retromer complex (also called SNX-BAR retromer) which is a pentamer containing the heterotrimeric retromer cargo-selective complex (CSC), also decribed as vacuolar protein sorting subcomplex (VPS) and a heterodimeric membrane-deforming subcomplex formed between SNX1 or SNX2 and SNX5 or SNX6 (also called SNX-BAR subcomplex); the respective CSC and SNX-BAR subcomplexes associate with low affinity. Interacts with SNX5, SNX6, SNX32, VPS26A, VPS29, VPS35, FNBP1, KALRN, RHOG (GDP-bound form).

Its subcellular location is the early endosome membrane. It is found in the cell projection. The protein resides in the lamellipodium. In terms of biological role, involved in several stages of intracellular trafficking. Interacts with membranes containing phosphatidylinositol 3-phosphate (PtdIns(3P)) or phosphatidylinositol 3,5-bisphosphate (PtdIns(3,5)P2). Acts in part as component of the retromer membrane-deforming SNX-BAR subcomplex. The SNX-BAR retromer mediates retrograde transport of cargo proteins from endosomes to the trans-Golgi network (TGN) and is involved in endosome-to-plasma membrane transport for cargo protein recycling. The SNX-BAR subcomplex functions to deform the donor membrane into a tubular profile called endosome-to-TGN transport carrier (ETC). Can sense membrane curvature and has in vitro vesicle-to-membrane remodeling activity. Required for retrograde endosome-to-TGN transport of TGN38. Promotes KALRN- and RHOG-dependent but retromer-independent membrane remodeling such as lamellipodium formation; the function is dependent on GEF activity of KALRN. The polypeptide is Sorting nexin-2 (SNX2) (Bos taurus (Bovine)).